The chain runs to 1187 residues: DNA-directed RNA polymerase subunit beta (1187 aa).

Residues Lys1150–Gln1187 are disordered. The span at Ala1173 to Gln1187 shows a compositional bias: basic and acidic residues.

Belongs to the RNA polymerase beta chain family. As to quaternary structure, the RNAP catalytic core consists of 2 alpha, 1 beta, 1 beta' and 1 omega subunit. When a sigma factor is associated with the core the holoenzyme is formed, which can initiate transcription.

The catalysed reaction is RNA(n) + a ribonucleoside 5'-triphosphate = RNA(n+1) + diphosphate. In terms of biological role, DNA-dependent RNA polymerase catalyzes the transcription of DNA into RNA using the four ribonucleoside triphosphates as substrates. The protein is DNA-directed RNA polymerase subunit beta of Bifidobacterium longum (strain DJO10A).